Reading from the N-terminus, the 262-residue chain is uncharacterized protein (262 aa).

6 consecutive transmembrane segments (helical) span residues 7-27 (LAVA…LAHM), 58-78 (DTLG…IVFG), 114-134 (FLAF…VLGG), 140-160 (GGFQ…IAFG), 179-199 (GALG…YYLF), and 216-236 (IITA…VLAG).

It is found in the cell membrane. This is an uncharacterized protein from Methanocaldococcus jannaschii (strain ATCC 43067 / DSM 2661 / JAL-1 / JCM 10045 / NBRC 100440) (Methanococcus jannaschii).